A 151-amino-acid chain; its full sequence is MFGMVPFRRNNNGLMRREDFFDKMFDNFFSDDFFPTTTFNGNAGFKVDIKEDDDKYTVAADLPGVKKDNIELQYENNYLTINAKRDDIVETKDDNNNFVRRERSYGELRRSFYVDNIDDSKIDASFLDGVLRITLPKKVKGKDNGRRIDIH.

The sHSP domain occupies 38 to 151 (TFNGNAGFKV…KDNGRRIDIH (114 aa)).

The protein belongs to the small heat shock protein (HSP20) family.

Its function is as follows. Probable chaperone. This chain is 18 kDa heat shock protein (hsp18), found in Clostridium acetobutylicum (strain ATCC 824 / DSM 792 / JCM 1419 / IAM 19013 / LMG 5710 / NBRC 13948 / NRRL B-527 / VKM B-1787 / 2291 / W).